A 607-amino-acid chain; its full sequence is MNNSGFAFDPDVFLSHVSTLSGVYQMRDQNGTVLYVGKAKNLRQRLSHYFQKTGLSVKTRALMRAVYDIQTTSTPTEAEALLLENNLIKQYQPKFNILLRDDKSYPYICLSQHDFPRLFLYRGARKNGDFFGPYPNVQSAHHALAILQKVFRLRPCLDSFFKNRSRPCLQYQIKRCYAPCVGKISAEMYAQTVQHARDFLTGNSEHLLQTLTEHMLQASAAQQYERAAIVRDQISELRTIQQKQSMVVYAANVDVLAVATAYGKACVQVLFFRDGHSVTSQAFFPKLPELLPAGAILQAFIGQFYHQRPVPSQIVLSEALPDMDAVSEFLSQMSAHTVTLTTQPRAIRKKWLRMTQENARLNLRLHLAQKLSMHERFKALAQAFDWQKMPQRLECVDISHMQGEYTVASCVVFDRRGAVKSDYRRYKINGITGGDDYAAMKQVIKRRFARLKKGEGVMPDVFFVDGGRGQLQQAIAVFEEMQIEGVQLIGVAKGEGRKAGLEQFWFPHENRPRTLPADSQAMQLIIHIRDEAHRFAISAHRRGRDKKVRVSLLEEIPNIGRKRRQALLQHFGNLAGLMQASPEDITRVPGISVKLAAQIYAALHQGE.

The GIY-YIG domain maps to 19–97 (TLSGVYQMRD…IKQYQPKFNI (79 aa)). The 36-residue stretch at 205–240 (EHLLQTLTEHMLQASAAQQYERAAIVRDQISELRTI) folds into the UVR domain.

It belongs to the UvrC family. In terms of assembly, interacts with UvrB in an incision complex.

The protein localises to the cytoplasm. Functionally, the UvrABC repair system catalyzes the recognition and processing of DNA lesions. UvrC both incises the 5' and 3' sides of the lesion. The N-terminal half is responsible for the 3' incision and the C-terminal half is responsible for the 5' incision. This Dichelobacter nodosus (strain VCS1703A) protein is UvrABC system protein C.